The following is a 184-amino-acid chain: GTP cyclohydrolase 1 (184 aa).

C75, H78, and C146 together coordinate Zn(2+).

Belongs to the GTP cyclohydrolase I family. As to quaternary structure, toroid-shaped homodecamer, composed of two pentamers of five dimers.

It catalyses the reaction GTP + H2O = 7,8-dihydroneopterin 3'-triphosphate + formate + H(+). Its pathway is cofactor biosynthesis; 7,8-dihydroneopterin triphosphate biosynthesis; 7,8-dihydroneopterin triphosphate from GTP: step 1/1. This is GTP cyclohydrolase 1 from Chromohalobacter salexigens (strain ATCC BAA-138 / DSM 3043 / CIP 106854 / NCIMB 13768 / 1H11).